We begin with the raw amino-acid sequence, 619 residues long: Cationic amino acid transporter 3 (619 aa).

Residues 1–36 (MPWQAFRRFGQKLVRRRTLESGMAETRLARCLSTLD) lie on the Cytoplasmic side of the membrane. The chain crosses the membrane as a helical span at residues 37 to 57 (LVALGVGSTLGAGVYVLAGEV). Topologically, residues 58-61 (AKDK) are extracellular. Residues 62–82 (AGPSIVICFLVAALSSVLAGL) traverse the membrane as a helical segment. The Cytoplasmic segment spans residues 83–107 (CYAEFGARVPRSGSAYLYSYVTVGE). A helical membrane pass occupies residues 108-128 (LWAFTTGWNLILSYVIGTASV). The Extracellular segment spans residues 129–162 (ARAWSSAFDNLIGNHISKTLQGSIALHVPHVLAE). The helical transmembrane segment at 163–183 (YPDFFALGLVLLLTGLLALGA) threads the bilayer. The Cytoplasmic segment spans residues 184–191 (SESALVTK). Residues 192 to 212 (VFTGVNLLVLGFVMISGFVKG) traverse the membrane as a helical segment. Topologically, residues 213–233 (DVHNWKLTEEDYELAMAELND) are extracellular. A glycan (N-linked (GlcNAc...) asparagine) is linked at N232. Residues 234-254 (TYSLGPLGSGGFVPFGFEGIL) form a helical membrane-spanning segment. Topologically, residues 255–285 (RGAATCFYAFVGFDCIATTGEEAQNPQRSIP) are cytoplasmic. Residues 286-306 (MGIVISLSVCFLAYFAVSSAL) form a helical membrane-spanning segment. Topologically, residues 307-335 (TLMMPYYQLQPESPLPEAFLYIGWAPARY) are extracellular. A helical membrane pass occupies residues 336 to 356 (VVAVGSLCALSTSLLGSMFPM). The Cytoplasmic portion of the chain corresponds to 357–382 (PRVIYAMAEDGLLFRVLARIHTGTRT). The chain crosses the membrane as a helical span at residues 383–403 (PIIATVVSGIIAAFMAFLFKL). Topologically, residues 404–406 (TDL) are extracellular. The helical transmembrane segment at 407-427 (VDLMSIGTLLAYSLVSICVLI) threads the bilayer. Over 428–475 (LRYQPDQETKTGEEVELQEEAITTESEKLTLWGLFFPLNSIPTPLSGQ) the chain is Cytoplasmic. Residues 476–496 (IVYVCSSLLAVLLTALCLVLA) traverse the membrane as a helical segment. Over 497–506 (QWSVPLLSGD) the chain is Extracellular. The chain crosses the membrane as a helical span at residues 507 to 527 (LLWTAVVVLLLLLIIGIIVVI). Residues 528–540 (WRQPQSSTPLHFK) lie on the Cytoplasmic side of the membrane. The helical transmembrane segment at 541–561 (VPALPLLPLMSIFVNIYLMMQ) threads the bilayer. The Extracellular segment spans residues 562 to 569 (MTAGTWAR). The helical transmembrane segment at 570–590 (FGVWMLIGFAIYFGYGIQHSL) threads the bilayer. The Cytoplasmic portion of the chain corresponds to 591–619 (EEIKSNQPSRKSRAKTVDLDPGTLYVHSV). T606 is subject to Phosphothreonine. S618 bears the Phosphoserine mark.

It belongs to the amino acid-polyamine-organocation (APC) superfamily. Cationic amino acid transporter (CAT) (TC 2.A.3.3) family. In terms of processing, N-glycosylated. Highly expressed in thymus, uterus and testis. Detected at lower levels in brain, mammary gland, prostate, salivary gland and fetal spleen. In brain, highest expression in thalamus, hippocampus and amygdala.

It is found in the cell membrane. The catalysed reaction is L-arginine(in) = L-arginine(out). It carries out the reaction L-lysine(in) = L-lysine(out). It catalyses the reaction L-ornithine(in) = L-ornithine(out). In terms of biological role, uniporter that mediates the uptake of cationic L-amino acids such as L-arginine, L-lysine and L-ornithine. The transport is sodium ions- and pH-independent, moderately trans-stimulated and is mediated by passive diffusion. This is Cationic amino acid transporter 3 from Homo sapiens (Human).